A 943-amino-acid chain; its full sequence is Isoleucine--tRNA ligase (943 aa).

Positions 59 to 69 (PYANGQIHLGH) match the 'HIGH' region motif. Glu577 is a binding site for L-isoleucyl-5'-AMP. The 'KMSKS' region signature appears at 618–622 (KMSKS). Residue Lys621 participates in ATP binding. Zn(2+) is bound by residues Cys906, Cys909, Cys926, and Cys929.

This sequence belongs to the class-I aminoacyl-tRNA synthetase family. IleS type 1 subfamily. As to quaternary structure, monomer. The cofactor is Zn(2+).

It localises to the cytoplasm. The catalysed reaction is tRNA(Ile) + L-isoleucine + ATP = L-isoleucyl-tRNA(Ile) + AMP + diphosphate. Its function is as follows. Catalyzes the attachment of isoleucine to tRNA(Ile). As IleRS can inadvertently accommodate and process structurally similar amino acids such as valine, to avoid such errors it has two additional distinct tRNA(Ile)-dependent editing activities. One activity is designated as 'pretransfer' editing and involves the hydrolysis of activated Val-AMP. The other activity is designated 'posttransfer' editing and involves deacylation of mischarged Val-tRNA(Ile). This is Isoleucine--tRNA ligase from Xanthomonas oryzae pv. oryzae (strain MAFF 311018).